The chain runs to 300 residues: Cation-efflux pump FieF (300 aa).

The next 4 helical transmembrane spans lie at 12 to 32 (AAIA…FAWW), 39 to 59 (ILAA…NLLV), 82 to 102 (AALA…LTGI), and 114 to 134 (PGVG…LVSF). Asp-45 and Asp-49 together coordinate Zn(2+). His-153 and Asp-157 together coordinate Zn(2+). The next 2 helical transmembrane spans lie at 156–176 (SDVM…YGWH) and 178–198 (ADAL…LRMG).

It belongs to the cation diffusion facilitator (CDF) transporter (TC 2.A.4) family. FieF subfamily. Homodimer.

The protein localises to the cell inner membrane. It catalyses the reaction Zn(2+)(in) + H(+)(out) = Zn(2+)(out) + H(+)(in). The enzyme catalyses Cd(2+)(in) + H(+)(out) = Cd(2+)(out) + H(+)(in). It carries out the reaction Fe(2+)(in) + H(+)(out) = Fe(2+)(out) + H(+)(in). Its function is as follows. Divalent metal cation transporter which exports Zn(2+), Cd(2+) and possibly Fe(2+). May be involved in zinc and iron detoxification by efflux. The chain is Cation-efflux pump FieF from Shigella boydii serotype 18 (strain CDC 3083-94 / BS512).